Consider the following 265-residue polypeptide: Type III pantothenate kinase (265 aa).

6–13 (DVGNTNIV) serves as a coordination point for ATP. 112-115 (GADR) is a substrate binding site. D114 (proton acceptor) is an active-site residue. D134 contributes to the K(+) binding site. T137 is a binding site for ATP. T189 contacts substrate.

Belongs to the type III pantothenate kinase family. In terms of assembly, homodimer. NH4(+) serves as cofactor. The cofactor is K(+).

It is found in the cytoplasm. The enzyme catalyses (R)-pantothenate + ATP = (R)-4'-phosphopantothenate + ADP + H(+). It functions in the pathway cofactor biosynthesis; coenzyme A biosynthesis; CoA from (R)-pantothenate: step 1/5. Its function is as follows. Catalyzes the phosphorylation of pantothenate (Pan), the first step in CoA biosynthesis. This chain is Type III pantothenate kinase, found in Saccharopolyspora erythraea (strain ATCC 11635 / DSM 40517 / JCM 4748 / NBRC 13426 / NCIMB 8594 / NRRL 2338).